The primary structure comprises 82 residues: Small ribosomal subunit protein uS17 (82 aa).

The protein belongs to the universal ribosomal protein uS17 family. As to quaternary structure, part of the 30S ribosomal subunit.

In terms of biological role, one of the primary rRNA binding proteins, it binds specifically to the 5'-end of 16S ribosomal RNA. This chain is Small ribosomal subunit protein uS17, found in Xanthobacter autotrophicus (strain ATCC BAA-1158 / Py2).